The chain runs to 89 residues: Cytochrome b (89 aa).

2 consecutive transmembrane segments (helical) span residues Phe-38–Met-58 and Trp-82–Ala-89. Residue His-88 participates in heme b binding.

The protein belongs to the cytochrome b family. In terms of assembly, the main subunits of complex b-c1 are: cytochrome b, cytochrome c1 and the Rieske protein. It depends on heme b as a cofactor.

The protein localises to the mitochondrion inner membrane. In terms of biological role, component of the ubiquinol-cytochrome c reductase complex (complex III or cytochrome b-c1 complex) that is part of the mitochondrial respiratory chain. The b-c1 complex mediates electron transfer from ubiquinol to cytochrome c. Contributes to the generation of a proton gradient across the mitochondrial membrane that is then used for ATP synthesis. The protein is Cytochrome b (MT-CYB) of Brassica napus (Rape).